Here is a 511-residue protein sequence, read N- to C-terminus: MNLLKSLAAVSSMTMFSRVLGFARDAIVARIFGAGMATDAFFVAFKLPNLLRRIFAEGAFSQAFVPILAEYKSKQGEDATRVFVSYVSGLLTLALAVVTVAGMLAAPWVIMVTAPGFADTADKFALTSQLLKITFPYILLISLASLVGAILNTWNRFSIPAFAPTLLNISMIGFALFAAPYFNPPVLALAWAVTVGGVLQLVYQLPHLKKIGMLVLPRINFHDAGAMRVVKQMGPAILGVSVSQISLIINTIFASFLASGSVSWMYYADRLMEFPSGVLGVALGTILLPSLSKSFASGNHDEYNRLMDWGLRLCFLLALPSAVALGILSGPLTVSLFQYGKFTAFDALMTQRALIAYSVGLIGLIVVKVLAPGFYSRQDIKTPVKIAIVTLILTQLMNLAFIGPLKHAGLSLSIGLAACLNASLLYWQLRKQKIFTPQPGWMAFLLRLVVAVLVMSGVLLGMLHIMPEWSLGTMPWRLLRLMAVVLAGIAAYFAALAVLGFKVKEFARRTV.

13 helical membrane passes run Ile31 to Leu51, Leu90 to Ile110, Leu130 to Ile150, Ile159 to Ala179, Phe182 to Val202, Ile237 to Leu257, Leu271 to Leu291, Cys314 to Val334, Leu354 to Phe374, Pro383 to Gly403, His407 to Trp427, Ala443 to Leu463, and Leu481 to Phe501.

Belongs to the MurJ/MviN family.

The protein resides in the cell inner membrane. Its pathway is cell wall biogenesis; peptidoglycan biosynthesis. Functionally, involved in peptidoglycan biosynthesis. Transports lipid-linked peptidoglycan precursors from the inner to the outer leaflet of the cytoplasmic membrane. This Escherichia coli O157:H7 protein is Probable lipid II flippase MurJ.